Reading from the N-terminus, the 269-residue chain is Imidazoleglycerol-phosphate dehydratase 3, chloroplastic (269 aa).

Residues 1-51 constitute a chloroplast transit peptide; sequence MTTAPVVSPSLSRLHSAPASPFPKAPVGSGAGVAFPARPYGPSLRLRSAVM. Substrate contacts are provided by residues Glu83, 109-117, 135-139, Arg161, and Arg183; these read HMLDQLASH and HHSNE. 4 residues coordinate Mn(2+): His109, His135, His136, and Glu139. Mn(2+) contacts are provided by His207, His231, His232, and Glu235. Residues 231 to 239 and 261 to 263 contribute to the substrate site; these read HHIIEATFK and SSK.

Belongs to the imidazoleglycerol-phosphate dehydratase family. The cofactor is Mn(2+).

The protein resides in the plastid. Its subcellular location is the chloroplast. The catalysed reaction is D-erythro-1-(imidazol-4-yl)glycerol 3-phosphate = 3-(imidazol-4-yl)-2-oxopropyl phosphate + H2O. The protein operates within amino-acid biosynthesis; L-histidine biosynthesis; L-histidine from 5-phospho-alpha-D-ribose 1-diphosphate: step 6/9. This is Imidazoleglycerol-phosphate dehydratase 3, chloroplastic from Triticum aestivum (Wheat).